The chain runs to 295 residues: ATP synthase gamma chain (295 aa).

This sequence belongs to the ATPase gamma chain family. In terms of assembly, F-type ATPases have 2 components, CF(1) - the catalytic core - and CF(0) - the membrane proton channel. CF(1) has five subunits: alpha(3), beta(3), gamma(1), delta(1), epsilon(1). CF(0) has three main subunits: a, b and c.

It localises to the cell inner membrane. Functionally, produces ATP from ADP in the presence of a proton gradient across the membrane. The gamma chain is believed to be important in regulating ATPase activity and the flow of protons through the CF(0) complex. This chain is ATP synthase gamma chain, found in Bdellovibrio bacteriovorus (strain ATCC 15356 / DSM 50701 / NCIMB 9529 / HD100).